The primary structure comprises 408 residues: 1-deoxy-D-xylulose 5-phosphate reductoisomerase (408 aa).

Residues T26, G27, S28, I29, and N143 each contribute to the NADPH site. 1-deoxy-D-xylulose 5-phosphate is bound at residue K144. An NADPH-binding site is contributed by E145. D167 provides a ligand contact to Mn(2+). 1-deoxy-D-xylulose 5-phosphate-binding residues include S168, E169, S193, and H216. Residue E169 coordinates Mn(2+). G222 provides a ligand contact to NADPH. 4 residues coordinate 1-deoxy-D-xylulose 5-phosphate: S229, N234, K235, and E238. Mn(2+) is bound at residue E238.

It belongs to the DXR family. Requires Mg(2+) as cofactor. Mn(2+) is required as a cofactor.

It carries out the reaction 2-C-methyl-D-erythritol 4-phosphate + NADP(+) = 1-deoxy-D-xylulose 5-phosphate + NADPH + H(+). Its pathway is isoprenoid biosynthesis; isopentenyl diphosphate biosynthesis via DXP pathway; isopentenyl diphosphate from 1-deoxy-D-xylulose 5-phosphate: step 1/6. Catalyzes the NADPH-dependent rearrangement and reduction of 1-deoxy-D-xylulose-5-phosphate (DXP) to 2-C-methyl-D-erythritol 4-phosphate (MEP). The protein is 1-deoxy-D-xylulose 5-phosphate reductoisomerase of Corynebacterium jeikeium (strain K411).